The sequence spans 596 residues: Aspartate--tRNA(Asp/Asn) ligase (596 aa).

Glu-175 contributes to the L-aspartate binding site. The aspartate stretch occupies residues 199-202 (QQYK). 2 residues coordinate L-aspartate: Arg-221 and His-454. Position 221-223 (221-223 (RDE)) interacts with ATP. ATP is bound at residue Glu-488. Residue Arg-495 participates in L-aspartate binding. 540–543 (GVDR) contributes to the ATP binding site.

It belongs to the class-II aminoacyl-tRNA synthetase family. Type 1 subfamily. Homodimer.

The protein localises to the cytoplasm. The catalysed reaction is tRNA(Asx) + L-aspartate + ATP = L-aspartyl-tRNA(Asx) + AMP + diphosphate. Its function is as follows. Aspartyl-tRNA synthetase with relaxed tRNA specificity since it is able to aspartylate not only its cognate tRNA(Asp) but also tRNA(Asn). Reaction proceeds in two steps: L-aspartate is first activated by ATP to form Asp-AMP and then transferred to the acceptor end of tRNA(Asp/Asn). The polypeptide is Aspartate--tRNA(Asp/Asn) ligase (Bartonella bacilliformis (strain ATCC 35685 / KC583 / Herrer 020/F12,63)).